The chain runs to 455 residues: UDP-glycosyltransferase 87A2 (455 aa).

Met-1 carries the post-translational modification N-acetylmethionine. UDP-alpha-D-glucose contacts are provided by residues Ser-278, 327-329 (CDQ), 344-352 (HCGFNSTLE), and 366-369 (FWDQ).

This sequence belongs to the UDP-glycosyltransferase family.

In Arabidopsis thaliana (Mouse-ear cress), this protein is UDP-glycosyltransferase 87A2 (UGT87A2).